The chain runs to 92 residues: Nodulation protein F (92 aa).

The 85-residue stretch at Q4–I88 folds into the Carrier domain. S45 carries the O-(pantetheine 4'-phosphoryl)serine modification.

In terms of processing, 4'-phosphopantetheine is transferred from CoA to a specific serine of apo-NodF.

In terms of biological role, proposed to synthesize nod factor fatty acyl chain. Involved in trans-2,trans-4,trans-6,cis-11-octadecatetraenoic acid biosynthesis. The chain is Nodulation protein F (nodF) from Rhizobium leguminosarum bv. trifolii.